The sequence spans 290 residues: 7-methylguanosine phosphate-specific 5'-nucleotidase B (290 aa).

Aspartate 39 functions as the Nucleophile in the catalytic mechanism. Aspartate 39 and aspartate 41 together coordinate Mg(2+). Catalysis depends on aspartate 41, which acts as the Proton donor. Glutamate 86 is a CMP binding site. Glutamate 86 is a binding site for N(7)-methyl-GMP. Substrate is bound by residues 154–155 (SA) and lysine 203. Aspartate 228 provides a ligand contact to Mg(2+).

It belongs to the pyrimidine 5'-nucleotidase family. Monomer.

Its subcellular location is the cytoplasm. The catalysed reaction is N(7)-methyl-GMP + H2O = N(7)-methylguanosine + phosphate. The enzyme catalyses CMP + H2O = cytidine + phosphate. It catalyses the reaction a ribonucleoside 5'-phosphate + H2O = a ribonucleoside + phosphate. In terms of biological role, specifically hydrolyzes 7-methylguanosine monophosphate (m(7)GMP) to 7-methylguanosine and inorganic phosphate. The specific activity for m(7)GMP may protect cells against undesired salvage of m(7)GMP and its incorporation into nucleic acids. Also has weak activity for CMP. UMP and purine nucleotides are poor substrates. The sequence is that of 7-methylguanosine phosphate-specific 5'-nucleotidase B (Nt5c3b-b) from Xenopus laevis (African clawed frog).